The sequence spans 373 residues: Bifunctional enzyme IspD/IspF (373 aa).

The tract at residues 1–213 (MSDLTLVLLG…CLQKPSATKR (213 aa)) is 2-C-methyl-D-erythritol 4-phosphate cytidylyltransferase. A 2-C-methyl-D-erythritol 2,4-cyclodiphosphate synthase region spans residues 213–373 (RIGNGLDVHA…TLHYFDWSEI (161 aa)). Residues D219 and H221 each contribute to the a divalent metal cation site. 4-CDP-2-C-methyl-D-erythritol 2-phosphate contacts are provided by residues 219–221 (DVH) and 245–246 (HS). An a divalent metal cation-binding site is contributed by H253. Residues 267-269 (DIG), 272-276 (FPDSD), 343-346 (TTTE), F350, and R353 contribute to the 4-CDP-2-C-methyl-D-erythritol 2-phosphate site.

In the N-terminal section; belongs to the IspD/TarI cytidylyltransferase family. IspD subfamily. This sequence in the C-terminal section; belongs to the IspF family. Requires a divalent metal cation as cofactor.

It carries out the reaction 2-C-methyl-D-erythritol 4-phosphate + CTP + H(+) = 4-CDP-2-C-methyl-D-erythritol + diphosphate. The enzyme catalyses 4-CDP-2-C-methyl-D-erythritol 2-phosphate = 2-C-methyl-D-erythritol 2,4-cyclic diphosphate + CMP. Its pathway is isoprenoid biosynthesis; isopentenyl diphosphate biosynthesis via DXP pathway; isopentenyl diphosphate from 1-deoxy-D-xylulose 5-phosphate: step 2/6. The protein operates within isoprenoid biosynthesis; isopentenyl diphosphate biosynthesis via DXP pathway; isopentenyl diphosphate from 1-deoxy-D-xylulose 5-phosphate: step 4/6. Functionally, bifunctional enzyme that catalyzes the formation of 4-diphosphocytidyl-2-C-methyl-D-erythritol from CTP and 2-C-methyl-D-erythritol 4-phosphate (MEP) (IspD), and catalyzes the conversion of 4-diphosphocytidyl-2-C-methyl-D-erythritol 2-phosphate (CDP-ME2P) to 2-C-methyl-D-erythritol 2,4-cyclodiphosphate (ME-CPP) with a corresponding release of cytidine 5-monophosphate (CMP) (IspF). In Nitratiruptor sp. (strain SB155-2), this protein is Bifunctional enzyme IspD/IspF.